The primary structure comprises 218 residues: GTP cyclohydrolase 1 (218 aa).

Zn(2+)-binding residues include Cys-109, His-112, and Cys-180.

The protein belongs to the GTP cyclohydrolase I family. Toroid-shaped homodecamer, composed of two pentamers of five dimers.

It carries out the reaction GTP + H2O = 7,8-dihydroneopterin 3'-triphosphate + formate + H(+). Its pathway is cofactor biosynthesis; 7,8-dihydroneopterin triphosphate biosynthesis; 7,8-dihydroneopterin triphosphate from GTP: step 1/1. The protein is GTP cyclohydrolase 1 (folE) of Haemophilus influenzae (strain ATCC 51907 / DSM 11121 / KW20 / Rd).